We begin with the raw amino-acid sequence, 379 residues long: Spermatogenesis-associated protein 17 (379 aa).

IQ domains are found at residues 48-77, 71-100, and 107-136; these read ENDA…VVTI, LNRV…AAYY, and YNEM…LKEY.

As to expression, strongly expressed in adult testis but weakly expressed in the spleen and thymus. Strongly expressed in round and elongating spermatids, and weakly or not expressed in spermatozoa.

It is found in the cytoplasm. In Mus musculus (Mouse), this protein is Spermatogenesis-associated protein 17 (Spata17).